A 250-amino-acid chain; its full sequence is Ribosomal RNA small subunit methyltransferase J (250 aa).

Residues 101–102, 117–118, 153–154, and D171 each bind S-adenosyl-L-methionine; these read RD, ER, and SS.

Belongs to the methyltransferase superfamily. RsmJ family.

The protein localises to the cytoplasm. It catalyses the reaction guanosine(1516) in 16S rRNA + S-adenosyl-L-methionine = N(2)-methylguanosine(1516) in 16S rRNA + S-adenosyl-L-homocysteine + H(+). In terms of biological role, specifically methylates the guanosine in position 1516 of 16S rRNA. This is Ribosomal RNA small subunit methyltransferase J from Klebsiella pneumoniae (strain 342).